A 234-amino-acid chain; its full sequence is RNA chaperone ProQ (234 aa).

A compositionally biased stretch (basic and acidic residues) spans 104 to 130; that stretch reads LEEAKARVQAQRDARKREAAENGEKRE. The segment at 104–186 is disordered; sequence LEEAKARVQA…QRSTPVTSLE (83 aa). A compositionally biased stretch (basic residues) spans 131–142; it reads PRRPRPAGKKPT. 2 stretches are compositionally biased toward basic and acidic residues: residues 143–156 and 163–176; these read ARRD…EVRK and TSER…ETTE. Over residues 177 to 186 the composition is skewed to polar residues; it reads QRSTPVTSLE.

Belongs to the ProQ family.

Its subcellular location is the cytoplasm. Functionally, RNA chaperone with significant RNA binding, RNA strand exchange and RNA duplexing activities. May regulate ProP activity through an RNA-based, post-transcriptional mechanism. The polypeptide is RNA chaperone ProQ (Edwardsiella ictaluri (strain 93-146)).